The following is a 297-amino-acid chain: Translational activator of cytochrome c oxidase 1 (297 aa).

Residues 20 to 45 (RGPGVRAAPPRDPRPSHPEPRGCGAA) are disordered. Basic and acidic residues predominate over residues 28-39 (PPRDPRPSHPEP). A coiled-coil region spans residues 191-227 (VEVEDREKKAVNLERALEMAIEAGAEDVKETEDEEER).

Belongs to the TACO1 family.

It is found in the mitochondrion. Functionally, acts as a translational activator of mitochondrially-encoded cytochrome c oxidase 1. The sequence is that of Translational activator of cytochrome c oxidase 1 (TACO1) from Homo sapiens (Human).